Here is a 553-residue protein sequence, read N- to C-terminus: Phenylalanine--tRNA ligase beta subunit (553 aa).

The 77-residue stretch at 273 to 349 (FNVRNIDIEV…RAFGYNNITP (77 aa)) folds into the B5 domain. Residues Asp327, Asp333, Asp336, and Asp337 each contribute to the Mg(2+) site.

The protein belongs to the phenylalanyl-tRNA synthetase beta subunit family. Type 2 subfamily. Tetramer of two alpha and two beta subunits. The cofactor is Mg(2+).

It localises to the cytoplasm. The catalysed reaction is tRNA(Phe) + L-phenylalanine + ATP = L-phenylalanyl-tRNA(Phe) + AMP + diphosphate + H(+). The sequence is that of Phenylalanine--tRNA ligase beta subunit from Methanocella arvoryzae (strain DSM 22066 / NBRC 105507 / MRE50).